A 484-amino-acid chain; its full sequence is Arginine ADP-riboxanase OspC2 (484 aa).

11 residues coordinate NAD(+): His143, Gln144, Ser145, Leu149, Ile162, Asn172, Phe188, His206, Phe211, Asp231, and Glu326. The active site involves Glu326. ANK repeat units follow at residues 414–444 (LYDVEYLLSEDSANYKVLEYFISNGLVDVNK) and 451–480 (SGDTMLDNAMKSKDSKTIDFLLKNGAVSGK).

This sequence belongs to the OspC family.

It is found in the secreted. It carries out the reaction L-arginyl-[protein] + NAD(+) = ADP-riboxanated L-argininyl-[protein] + nicotinamide + NH4(+) + H(+). In terms of biological role, ADP-riboxanase effector that mediates arginine ADP-riboxanation of host caspases. ADP-riboxanation of host apoptotic caspases (CASP3 and CASP9) prevents their activation, thereby inhibiting host cell extrinsic and intrinsic apoptosis. Does not catalyze ADP-riboxanation of host CASP4/CASP11 or CASP8. In contrast to Ospc1 and OspC3, not able to inactivate host calmodulin. In Shigella flexneri, this protein is Arginine ADP-riboxanase OspC2.